The chain runs to 863 residues: Leucine--tRNA ligase (863 aa).

The 'HIGH' region signature appears at 40–51 (PYPSGAGLHVGH). The 'KMSKS' region signature appears at 635 to 639 (KMSKS). Lysine 638 contacts ATP.

Belongs to the class-I aminoacyl-tRNA synthetase family.

The protein localises to the cytoplasm. It catalyses the reaction tRNA(Leu) + L-leucine + ATP = L-leucyl-tRNA(Leu) + AMP + diphosphate. This Leptospira interrogans serogroup Icterohaemorrhagiae serovar copenhageni (strain Fiocruz L1-130) protein is Leucine--tRNA ligase.